The chain runs to 399 residues: Phosphoglycerate kinase (399 aa).

Substrate-binding positions include 22-24, arginine 37, 60-63, arginine 119, and arginine 152; these read DLN and HFGR. ATP is bound by residues lysine 202, glutamate 324, and 354–357; that span reads GGDT.

Belongs to the phosphoglycerate kinase family. In terms of assembly, monomer.

The protein resides in the cytoplasm. The enzyme catalyses (2R)-3-phosphoglycerate + ATP = (2R)-3-phospho-glyceroyl phosphate + ADP. It functions in the pathway carbohydrate degradation; glycolysis; pyruvate from D-glyceraldehyde 3-phosphate: step 2/5. The chain is Phosphoglycerate kinase from Sinorhizobium medicae (strain WSM419) (Ensifer medicae).